Consider the following 157-residue polypeptide: uncharacterized protein (157 aa).

Residues 9 to 154 enclose the N-acetyltransferase domain; it reads LLINYKTLDE…ETNSNAITNE (146 aa).

This is an uncharacterized protein from Bacillus mycoides (strain KBAB4) (Bacillus weihenstephanensis).